Reading from the N-terminus, the 72-residue chain is Delta-actitoxin-Avd2b 3 (72 aa).

The first 21 residues, 1–21 (MMSRLLVFLMLGAAFMLVVSA), serve as a signal peptide directing secretion. A propeptide spanning residues 22 to 42 (NDAYGDEPAFKDLNQGDESLG) is cleaved from the precursor. Disulfide bonds link Cys47-Cys62, Cys48-Cys56, and Cys50-Cys67.

Belongs to the sea anemone short toxin (type III) family.

It is found in the secreted. The protein resides in the nematocyst. Functionally, voltage-gated sodium channel (Nav) inhibitor. 1 uM completely inhibits insect voltage-gated sodium channel inactivation (DmNav1 from D.melanogaster). The polypeptide is Delta-actitoxin-Avd2b 3 (Anemonia viridis (Snakelocks anemone)).